Consider the following 170-residue polypeptide: Opacity-related protein POPM3 (170 aa).

The protein belongs to the opacity porin family.

The protein resides in the cell outer membrane. The sequence is that of Opacity-related protein POPM3 (opr) from Neisseria meningitidis serogroup C.